The following is a 373-amino-acid chain: Peptide chain release factor 2 (373 aa).

N5-methylglutamine is present on Gln251.

Belongs to the prokaryotic/mitochondrial release factor family. Post-translationally, methylated by PrmC. Methylation increases the termination efficiency of RF2.

Its subcellular location is the cytoplasm. Peptide chain release factor 2 directs the termination of translation in response to the peptide chain termination codons UGA and UAA. The protein is Peptide chain release factor 2 of Salinispora tropica (strain ATCC BAA-916 / DSM 44818 / JCM 13857 / NBRC 105044 / CNB-440).